We begin with the raw amino-acid sequence, 430 residues long: Carbamoyl phosphate synthase arginine-specific small chain (430 aa).

Residues 1 to 9 (MLSATKRYL) constitute a mitochondrion transit peptide. The Glutamine amidotransferase type-1 domain maps to 219-407 (HIAVLDCGAK…FDNINVYKKS (189 aa)). Cysteine 296 functions as the Nucleophile in the catalytic mechanism. Active-site residues include histidine 380 and glutamate 382.

Belongs to the CarA family. Heterodimer composed of 2 chains; the small (or glutamine) chain promotes the hydrolysis of glutamine to ammonia, which is used by the large (or ammonia) chain to synthesize carbamoyl phosphate.

It is found in the mitochondrion matrix. It catalyses the reaction hydrogencarbonate + L-glutamine + 2 ATP + H2O = carbamoyl phosphate + L-glutamate + 2 ADP + phosphate + 2 H(+). The catalysed reaction is L-glutamine + H2O = L-glutamate + NH4(+). It participates in amino-acid biosynthesis; L-arginine biosynthesis; carbamoyl phosphate from bicarbonate: step 1/1. Small subunit of the arginine-specific carbamoyl phosphate synthase (CPSase). CPSase catalyzes the formation of carbamoyl phosphate from the ammonia moiety of glutamine, carbonate, and phosphate donated by ATP, the first step of the arginine biosynthetic pathway. The small subunit (glutamine amidotransferase) binds and cleaves glutamine to supply the large subunit with the substrate ammonia. This is Carbamoyl phosphate synthase arginine-specific small chain (CPA1) from Candida albicans (strain SC5314 / ATCC MYA-2876) (Yeast).